Reading from the N-terminus, the 336-residue chain is Transcription initiation factor IIB (336 aa).

A TFIIB-type zinc finger spans residues 41–72; the sequence is QKLRCPICGNTVFIEDAERGQIVCASCGYVLM. Zn(2+) is bound by residues C45, C48, C64, and C67. A run of 2 repeats spans residues 152–235 and 246–327.

Belongs to the TFIIB family.

Its function is as follows. Stabilizes TBP binding to an archaeal box-A promoter. Also responsible for recruiting RNA polymerase II to the pre-initiation complex (DNA-TBP-TFIIB). In Caldivirga maquilingensis (strain ATCC 700844 / DSM 13496 / JCM 10307 / IC-167), this protein is Transcription initiation factor IIB.